The chain runs to 397 residues: Lysophospholipid transporter LplT (397 aa).

A run of 11 helical transmembrane segments spans residues 21-41 (SAQF…LALL), 53-73 (ILQM…GQVA), 91-111 (LGAA…LVGI), 139-159 (LMES…GVLA), 164-184 (LAAL…NLFI), 229-249 (WGAG…ALGI), 257-277 (YLNA…AKLV), 281-301 (TVRR…FFSL), 304-324 (ALLP…FFIV), 344-364 (IAVQ…LYSL), and 372-392 (VVGI…GLWI).

It belongs to the major facilitator superfamily. LplT (TC 2.A.1.42) family.

It is found in the cell inner membrane. In terms of biological role, catalyzes the facilitated diffusion of 2-acyl-glycero-3-phosphoethanolamine (2-acyl-GPE) into the cell. The sequence is that of Lysophospholipid transporter LplT from Enterobacter sp. (strain 638).